A 916-amino-acid polypeptide reads, in one-letter code: Protein translocase subunit SecA (916 aa).

ATP-binding positions include Gln-87, 105-109 (GEGKT), and Asp-507. Cys-900, Cys-902, Cys-911, and His-912 together coordinate Zn(2+).

Belongs to the SecA family. As to quaternary structure, monomer and homodimer. Part of the essential Sec protein translocation apparatus which comprises SecA, SecYEG and auxiliary proteins SecDF-YajC and YidC. Requires Zn(2+) as cofactor.

It localises to the cell inner membrane. The protein localises to the cytoplasm. The catalysed reaction is ATP + H2O + cellular proteinSide 1 = ADP + phosphate + cellular proteinSide 2.. Part of the Sec protein translocase complex. Interacts with the SecYEG preprotein conducting channel. Has a central role in coupling the hydrolysis of ATP to the transfer of proteins into and across the cell membrane, serving both as a receptor for the preprotein-SecB complex and as an ATP-driven molecular motor driving the stepwise translocation of polypeptide chains across the membrane. This chain is Protein translocase subunit SecA, found in Neisseria meningitidis serogroup C (strain 053442).